The primary structure comprises 62 residues: UPF0339 protein Atu0232 (62 aa).

This sequence belongs to the UPF0339 family.

The polypeptide is UPF0339 protein Atu0232 (Agrobacterium fabrum (strain C58 / ATCC 33970) (Agrobacterium tumefaciens (strain C58))).